The following is a 213-amino-acid chain: MGNGTEEDYNFVFKVVLIGESGVGKTNLLSRFTRNEFSHDSRTTIGVEFSTRTVMLGTAAVKAQIWDTAGLERYRAITSAYYRGAVGALLVFDLTKHQTYAVVERWLKELYDHAEATIVVMLVGNKSDLSQAREVPTEEARMFAENNGLLFLETSALDSTNVELAFETVLKEIFAKVSKQRQNSIRTNAITLGSAQAGQEPGPGEKRACCISL.

GTP contacts are provided by Ser-21, Gly-24, Lys-25, Thr-26, Asn-27, Ser-38, His-39, Thr-43, and Thr-44. Mg(2+) is bound at residue Thr-26. 2 consecutive short sequence motifs (switch) follow at residues 35 to 49 and 67 to 84; these read NEFS…GVEF and DTAG…YYRG. Positions 44 and 67 each coordinate Mg(2+). Residues Gly-70, Asn-125, Lys-126, Asp-128, Ala-156, and Leu-157 each contribute to the GTP site. Residues Cys-209 and Cys-210 are each lipidated (S-geranylgeranyl cysteine). The residue at position 210 (Cys-210) is a Cysteine methyl ester. A propeptide spans 211–213 (removed in mature form); sequence ISL.

It belongs to the small GTPase superfamily. Rab family. Interacts (GTP-bound form) with RAB11FIP1, RAB11FIP2, RAB11FIP3 and RAB11FIP4. Interacts (via the hypervariable C-terminal region) with ITGB1 (via the cytoplasmic region); the interaction is GTP-dependent. Interacts with ITGAV. Associates with the integrin alpha-V/beta-1 heterodimer. Interacts with VPS33B. It depends on Mg(2+) as a cofactor. As to expression, expression is restricted to epithelial cells. Expressed in ovarian epithelium (NOE) and breast tissue. Expressed in ovarian cancer; expression is increased relative to NOE cells. Expression in ovarian cancer is stage dependent, with stage III and stage IV showing higher levels than early stage cancers. Expressed in breast cancer; expression is increased relative to normal breast tissue.

It is found in the cell membrane. Its subcellular location is the cytoplasmic vesicle. The protein resides in the cell projection. The protein localises to the pseudopodium membrane. The enzyme catalyses GTP + H2O = GDP + phosphate + H(+). Its activity is regulated as follows. Regulated by guanine nucleotide exchange factors (GEFs) which promote the exchange of bound GDP for free GTP. Regulated by GTPase activating proteins (GAPs) which increase the GTP hydrolysis activity. Inhibited by GDP dissociation inhibitors (GDIs) which prevent Rab-GDP dissociation. Its function is as follows. The small GTPases Rab are key regulators of intracellular membrane trafficking, from the formation of transport vesicles to their fusion with membranes. Rabs cycle between an inactive GDP-bound form and an active GTP-bound form that is able to recruit to membranes different set of downstream effectors directly responsible for vesicle formation, movement, tethering and fusion. RAB25 regulates epithelial cell differentiation, proliferation and survival, thereby playing key roles in tumorigenesis. Promotes invasive migration of cells in which it functions to localize and maintain integrin alpha-V/beta-1 at the tips of extending pseudopodia. Involved in the regulation of epithelial morphogenesis through the control of CLDN4 expression and localization at tight junctions. May selectively regulate the apical recycling pathway. Together with MYO5B regulates transcytosis. The sequence is that of Ras-related protein Rab-25 from Homo sapiens (Human).